Consider the following 198-residue polypeptide: Guanine nucleotide-binding protein subunit alpha-11 (198 aa).

A G1 motif region spans residues 1-11 (LLGTGESGKST). Positions 1–198 (LLGTGESGKS…LSEYDHVLVE (198 aa)) constitute a G-alpha domain. Residues 3 to 10 (GTGESGKS) and 137 to 140 (LRVR) contribute to the GTP site. A Mg(2+)-binding site is contributed by Ser-10. The G2 motif stretch occupies residues 135 to 143 (DVLRVRVPT). Thr-143 contributes to the Mg(2+) binding site. The segment at 158-167 (FRMVDVGGQR) is G3 motif.

It belongs to the G-alpha family. G(q) subfamily. G proteins are composed of 3 units; alpha, beta and gamma. The alpha chain contains the guanine nucleotide binding site. Interacts with RGS22. Interacts with NTSR1.

The protein localises to the cell membrane. Its subcellular location is the cytoplasm. It catalyses the reaction GTP + H2O = GDP + phosphate + H(+). In terms of biological role, guanine nucleotide-binding proteins (G proteins) function as transducers downstream of G protein-coupled receptors (GPCRs) in numerous signaling cascades. The alpha chain contains the guanine nucleotide binding site and alternates between an active, GTP-bound state and an inactive, GDP-bound state. Signaling by an activated GPCR promotes GDP release and GTP binding. The alpha subunit has a low GTPase activity that converts bound GTP to GDP, thereby terminating the signal. Both GDP release and GTP hydrolysis are modulated by numerous regulatory proteins. Signaling is mediated via phospholipase C-beta-dependent inositol lipid hydrolysis for signal propagation: activates phospholipase C-beta: following GPCR activation, GNA11 activates PLC-beta (PLCB1, PLCB2, PLCB3 or PLCB4), leading to production of diacylglycerol (DAG) and inositol 1,4,5-trisphosphate (IP3). Transduces FFAR4 signaling in response to long-chain fatty acids (LCFAs). Together with GNAQ, required for heart development. In the respiratory epithelium, transmits OXGR1-dependent signals that lead to downstream intracellular Ca(2+) release and mucocilliary clearance of airborne pathogens. The chain is Guanine nucleotide-binding protein subunit alpha-11 (GNA11) from Canis lupus familiaris (Dog).